Reading from the N-terminus, the 391-residue chain is Histidinol-phosphate aminotransferase (391 aa).

Lys-245 is modified (N6-(pyridoxal phosphate)lysine).

This sequence belongs to the class-II pyridoxal-phosphate-dependent aminotransferase family. Histidinol-phosphate aminotransferase subfamily. As to quaternary structure, homodimer. Pyridoxal 5'-phosphate is required as a cofactor.

It carries out the reaction L-histidinol phosphate + 2-oxoglutarate = 3-(imidazol-4-yl)-2-oxopropyl phosphate + L-glutamate. It participates in amino-acid biosynthesis; L-histidine biosynthesis; L-histidine from 5-phospho-alpha-D-ribose 1-diphosphate: step 7/9. In Bifidobacterium adolescentis (strain ATCC 15703 / DSM 20083 / NCTC 11814 / E194a), this protein is Histidinol-phosphate aminotransferase.